The following is a 213-amino-acid chain: Thymidylate kinase (213 aa).

Position 10–17 (10–17 (GLEGAGKT)) interacts with ATP.

Belongs to the thymidylate kinase family.

The enzyme catalyses dTMP + ATP = dTDP + ADP. Its function is as follows. Phosphorylation of dTMP to form dTDP in both de novo and salvage pathways of dTTP synthesis. The sequence is that of Thymidylate kinase from Escherichia coli O1:K1 / APEC.